The primary structure comprises 23 residues: SLIQFETLIMKVAGQSGMFSYSA.

Ca(2+) is required as a cofactor. Post-translationally, contains 7 disulfide bonds. In terms of tissue distribution, expressed by the venom gland.

The protein localises to the secreted. The enzyme catalyses a 1,2-diacyl-sn-glycero-3-phosphocholine + H2O = a 1-acyl-sn-glycero-3-phosphocholine + a fatty acid + H(+). Functionally, snake venom phospholipase A2 (PLA2) that shows a moderate inhibition of ADP-induced human platelet aggregation when tested on platelet rich plasma. Exhibits moderate hydrolytic activities and prefers the anionic micelles (dPPC with deoxycholate) to the zwitterionic micelles (dPPC with Triton X-100). PLA2 catalyzes the calcium-dependent hydrolysis of the 2-acyl groups in 3-sn-phosphoglycerides. This is Acidic phospholipase A2 CTs-A1 from Trimeresurus stejnegeri (Chinese green tree viper).